We begin with the raw amino-acid sequence, 184 residues long: Large ribosomal subunit protein bL9 (184 aa).

Positions 156–184 (RQAKLQNQKSEQQEAEQDASKEAADADDS) are disordered. The segment covering 173–184 (DASKEAADADDS) has biased composition (basic and acidic residues).

This sequence belongs to the bacterial ribosomal protein bL9 family.

In terms of biological role, binds to the 23S rRNA. This Wolbachia pipientis subsp. Culex pipiens (strain wPip) protein is Large ribosomal subunit protein bL9.